The following is a 233-amino-acid chain: Glucosamine-6-phosphate deaminase (233 aa).

The active-site Proton acceptor; for enolization step is the Asp-62. The For ring-opening step role is filled by Asn-128. The active-site Proton acceptor; for ring-opening step is His-130. The active-site For ring-opening step is the Glu-135.

The protein belongs to the glucosamine/galactosamine-6-phosphate isomerase family. NagB subfamily.

The enzyme catalyses alpha-D-glucosamine 6-phosphate + H2O = beta-D-fructose 6-phosphate + NH4(+). It functions in the pathway amino-sugar metabolism; N-acetylneuraminate degradation; D-fructose 6-phosphate from N-acetylneuraminate: step 5/5. Functionally, catalyzes the reversible isomerization-deamination of glucosamine 6-phosphate (GlcN6P) to form fructose 6-phosphate (Fru6P) and ammonium ion. In Leuconostoc citreum (strain KM20), this protein is Glucosamine-6-phosphate deaminase.